The following is a 264-amino-acid chain: Large ribosomal subunit protein mL50 (264 aa).

A mitochondrion-targeting transit peptide spans 1-75 (MSSLLKLHCI…EEGTNEASSQ (75 aa)).

It belongs to the mitochondrion-specific ribosomal protein mL50 family. Component of the mitochondrial large ribosomal subunit (mt-LSU). Mature yeast 74S mitochondrial ribosomes consist of a small (37S) and a large (54S) subunit. The 37S small subunit contains a 15S ribosomal RNA (15S mt-rRNA) and 34 different proteins. The 54S large subunit contains a 21S rRNA (21S mt-rRNA) and 46 different proteins.

The protein localises to the mitochondrion. Functionally, component of the mitochondrial ribosome (mitoribosome), a dedicated translation machinery responsible for the synthesis of mitochondrial genome-encoded proteins, including at least some of the essential transmembrane subunits of the mitochondrial respiratory chain. The mitoribosomes are attached to the mitochondrial inner membrane and translation products are cotranslationally integrated into the membrane. The protein is Large ribosomal subunit protein mL50 (MRPL13) of Saccharomyces cerevisiae (strain ATCC 204508 / S288c) (Baker's yeast).